A 224-amino-acid chain; its full sequence is Ras-related protein Rab-11C (224 aa).

GTP is bound at residue 17-24 (GDSAVGKS). Residues 39-47 (TKATIGVDF) carry the Effector region motif. Residues 65–69 (DTAGQ) and 123–126 (NKSD) each bind GTP. The segment at 194 to 224 (QGKKLTPLSDPAPQLTANTTSTHQEKKSGCC) is disordered. S-geranylgeranyl cysteine attachment occurs at residues cysteine 223 and cysteine 224.

Belongs to the small GTPase superfamily. Rab family.

It localises to the membrane. In Dictyostelium discoideum (Social amoeba), this protein is Ras-related protein Rab-11C (rab11C).